The chain runs to 159 residues: Vesicle transport protein SFT2A (159 aa).

Residues 1–36 (MEKLRRVLSGQDDEEQGLTAQVLDASSLSFNTRLKW) are Cytoplasmic-facing. Serine 9 is subject to Phosphoserine. Residues 37-57 (FAICFVCGVFFSILGTGLLWL) form a helical membrane-spanning segment. Residues 58–62 (PGGIK) are Lumenal-facing. The chain crosses the membrane as a helical span at residues 63-83 (LFAVFYTLGNLAALASTCFLM). Topologically, residues 84–97 (GPVKQLKKMFEATR) are cytoplasmic. The chain crosses the membrane as a helical span at residues 98-118 (LLATIVMLLCFIFTLCAALWW). Residues 119–122 (HKKG) lie on the Lumenal side of the membrane. The helical transmembrane segment at 123-143 (LAVLFCILQFLSMTWYSLSYI) threads the bilayer. Over 144–159 (PYARDAVIKCCSSLLS) the chain is Cytoplasmic.

It belongs to the SFT2 family.

It is found in the membrane. Its function is as follows. May be involved in fusion of retrograde transport vesicles derived from an endocytic compartment with the Golgi complex. The sequence is that of Vesicle transport protein SFT2A from Homo sapiens (Human).